The following is a 106-amino-acid chain: Small ribosomal subunit protein bS20 (106 aa).

The span at 1 to 32 shows a compositional bias: basic residues; that stretch reads MAQKKPKRNLSALKRHRQSLKRRLRNKAKKSA. The disordered stretch occupies residues 1 to 33; the sequence is MAQKKPKRNLSALKRHRQSLKRRLRNKAKKSAI.

This sequence belongs to the bacterial ribosomal protein bS20 family.

Functionally, binds directly to 16S ribosomal RNA. The chain is Small ribosomal subunit protein bS20 (rpsT) from Thermus thermophilus (strain ATCC BAA-163 / DSM 7039 / HB27).